Here is a 447-residue protein sequence, read N- to C-terminus: MSKVVHFDASKLTPFVHENELKEMQAMVTAADQELREGTGAGSDFRGWIDLPINYDKDEFDRIKKAAKKIQNDSEVLVGIGIGGSYLGAQASIEFLNSSFYGREKEKYPTVVFCGNSLSGSYLYDLLEWLGDKDFSINIISKSGTTTEPSIAFRVLKDKLIKKYGKEEAAKRIYATTDRAKGALKTEADAEGYEEFVVPDDIGGRFSVLSAVGLLPIAVAGGDIDAMMKGAADARAAYTDPDVSKDNPYQYAALRNILYRKGYTTELLENYEPSLRMFGEWWKQLMGESEGKDQKGIYPSSANFTTDLHSLGQYIQEGRRNLMETVIRVESPEHDVTIPDDKENLDQLNFLSGKTMNYVNDRAYEGVVLAHTDGGVPVMTVDIENQSAHTLGYLIYWFELAVGISGYLNGINPFNQPGVESYKRNMFGLLNKPGYEDLHDDLTKRLK.

The Proton donor role is filled by Glu288. Residues His309 and Lys423 contribute to the active site.

This sequence belongs to the GPI family.

The protein localises to the cytoplasm. The catalysed reaction is alpha-D-glucose 6-phosphate = beta-D-fructose 6-phosphate. The protein operates within carbohydrate biosynthesis; gluconeogenesis. Its pathway is carbohydrate degradation; glycolysis; D-glyceraldehyde 3-phosphate and glycerone phosphate from D-glucose: step 2/4. In terms of biological role, catalyzes the reversible isomerization of glucose-6-phosphate to fructose-6-phosphate. The polypeptide is Glucose-6-phosphate isomerase (Lactobacillus gasseri (strain ATCC 33323 / DSM 20243 / BCRC 14619 / CIP 102991 / JCM 1131 / KCTC 3163 / NCIMB 11718 / NCTC 13722 / AM63)).